Reading from the N-terminus, the 56-residue chain is AEIDRPVSLSGLTEGEAREFHGVFMTSFMVFIAVAIVAHILAWMWRPWIPGPEGYA.

Residues 1 to 22 (AEIDRPVSLSGLTEGEAREFHG) are Cytoplasmic-facing. Residues His-21 and His-39 each contribute to the a bacteriochlorophyll site. A helical transmembrane segment spans residues 23–45 (VFMTSFMVFIAVAIVAHILAWMW). At 46–56 (RPWIPGPEGYA) the chain is on the periplasmic side.

Belongs to the antenna complex beta subunit family. In terms of assembly, the core complex is formed by different alpha and beta chains, binding bacteriochlorophyll molecules, and arranged most probably in tetrameric structures disposed around the reaction center. The non-pigmented gamma chains may constitute additional components.

The protein resides in the cell inner membrane. Antenna complexes are light-harvesting systems, which transfer the excitation energy to the reaction centers. The protein is Light-harvesting protein B-880 beta chain of Afifella marina (Rhodobium marinum).